Consider the following 483-residue polypeptide: ATP-dependent protease ATPase subunit HslU (483 aa).

Residues V18 and 60-65 (GVGKTE) contribute to the ATP site. Composition is skewed to low complexity over residues 136–147 (LPGGAPQPAPAQ) and 171–181 (AQADASQASPP). The disordered stretch occupies residues 136-212 (LPGGAPQPAP…HGGKLDDREV (77 aa)). Residues 182 to 191 (TGTGSAPDSR) are compositionally biased toward polar residues. Basic and acidic residues predominate over residues 192 to 209 (SSTREKLRTLWHGGKLDD). Positions 296, 361, and 433 each coordinate ATP.

This sequence belongs to the ClpX chaperone family. HslU subfamily. A double ring-shaped homohexamer of HslV is capped on each side by a ring-shaped HslU homohexamer. The assembly of the HslU/HslV complex is dependent on binding of ATP.

The protein resides in the cytoplasm. In terms of biological role, ATPase subunit of a proteasome-like degradation complex; this subunit has chaperone activity. The binding of ATP and its subsequent hydrolysis by HslU are essential for unfolding of protein substrates subsequently hydrolyzed by HslV. HslU recognizes the N-terminal part of its protein substrates and unfolds these before they are guided to HslV for hydrolysis. The protein is ATP-dependent protease ATPase subunit HslU of Nitratidesulfovibrio vulgaris (strain DSM 19637 / Miyazaki F) (Desulfovibrio vulgaris).